A 190-amino-acid chain; its full sequence is Xanthine phosphoribosyltransferase (190 aa).

Xanthine-binding residues include Leu20 and Asn27. Position 128–132 (128–132 (ANGKA)) interacts with 5-phospho-alpha-D-ribose 1-diphosphate. Lys156 serves as a coordination point for xanthine.

Belongs to the purine/pyrimidine phosphoribosyltransferase family. Xpt subfamily. Homodimer.

The protein localises to the cytoplasm. It carries out the reaction XMP + diphosphate = xanthine + 5-phospho-alpha-D-ribose 1-diphosphate. It participates in purine metabolism; XMP biosynthesis via salvage pathway; XMP from xanthine: step 1/1. Converts the preformed base xanthine, a product of nucleic acid breakdown, to xanthosine 5'-monophosphate (XMP), so it can be reused for RNA or DNA synthesis. This is Xanthine phosphoribosyltransferase from Pseudomonas putida (strain ATCC 700007 / DSM 6899 / JCM 31910 / BCRC 17059 / LMG 24140 / F1).